The following is a 48-amino-acid chain: Palustrin-3a (48 aa).

Residues Cys-43 and Cys-48 are joined by a disulfide bond.

In terms of tissue distribution, expressed by the skin glands.

The protein localises to the secreted. Antimicrobial activity against Gram-negative bacterium E.coli. The chain is Palustrin-3a from Lithobates palustris (Pickerel frog).